A 287-amino-acid polypeptide reads, in one-letter code: Merozoite surface protein 2 (287 aa).

A signal peptide spans 1 to 20 (MKVIKTLSIINFFIFVTFNI). Residues Asn22 and Asn36 are each glycosylated (N-linked (GlcNAc...) asparagine). The segment at 42 to 248 (SMTESNPPTG…DSQKECTDGN (207 aa)) is disordered. A polymorphic region region spans residues 44-213 (TESNPPTGAS…EQTESPELQS (170 aa)). Over residues 54–112 (GSAGGSAGGSAGGSAGGSAGGSAGGSAGGSAGGSAGGSAGGSAGGSAGGSAGSGDGNGA) the composition is skewed to gly residues. 12 tandem repeats follow at residues 55 to 58 (SAGG), 59 to 62 (SAGG), 63 to 66 (SAGG), 67 to 70 (SAGG), 71 to 74 (SAGG), 75 to 78 (SAGG), 79 to 82 (SAGG), 83 to 86 (SAGG), 87 to 90 (SAGG), 91 to 94 (SAGG), 95 to 98 (SAGG), and 99 to 102 (SAGG). The segment at 55–102 (SAGGSAGGSAGGSAGGSAGGSAGGSAGGSAGGSAGGSAGGSAGGSAGG) is 12 X 4 AA tandem repeats of S-A-G-G. Over residues 121–149 (SPSTPATTTTTTTTNDAEASTSTSSENPN) the composition is skewed to low complexity. 2 stretches are compositionally biased toward polar residues: residues 150 to 180 (HNNA…NVPP) and 187 to 215 (KSPT…QSAP). Asn164 carries N-linked (GlcNAc...) asparagine glycosylation. Asn236 carries an N-linked (GlcNAc...) asparagine glycan. Residues Cys244 and Cys252 are joined by a disulfide bond. N-linked (GlcNAc...) asparagine glycans are attached at residues Asn260 and Asn261. The GPI-anchor amidated asparagine moiety is linked to residue Asn261. Residues 262–287 (SSNIASINKFVVLISATLVLSFAIFI) constitute a propeptide, removed in mature form.

The protein localises to the cell membrane. In terms of biological role, may play a role in the merozoite attachment to the erythrocyte. In Plasmodium falciparum (isolate FCR-3 / Gambia), this protein is Merozoite surface protein 2.